We begin with the raw amino-acid sequence, 279 residues long: Phosphatidylglycerol--prolipoprotein diacylglyceryl transferase (279 aa).

Helical transmembrane passes span 22–42, 58–78, 89–109, 128–148, 195–215, 223–243, and 256–276; these read SAHW…WSSI, ILYF…VIFY, FIFK…GSII, FLVP…FING, ISQL…LNIF, GYMS…AEFF, and YISL…ILII. Arg-141 is an a 1,2-diacyl-sn-glycero-3-phospho-(1'-sn-glycerol) binding site.

The protein belongs to the Lgt family.

It localises to the cell membrane. The catalysed reaction is L-cysteinyl-[prolipoprotein] + a 1,2-diacyl-sn-glycero-3-phospho-(1'-sn-glycerol) = an S-1,2-diacyl-sn-glyceryl-L-cysteinyl-[prolipoprotein] + sn-glycerol 1-phosphate + H(+). It participates in protein modification; lipoprotein biosynthesis (diacylglyceryl transfer). Catalyzes the transfer of the diacylglyceryl group from phosphatidylglycerol to the sulfhydryl group of the N-terminal cysteine of a prolipoprotein, the first step in the formation of mature lipoproteins. This Wigglesworthia glossinidia brevipalpis protein is Phosphatidylglycerol--prolipoprotein diacylglyceryl transferase.